A 177-amino-acid chain; its full sequence is Hypoxanthine phosphoribosyltransferase (177 aa).

Diphosphate contacts are provided by Arg-43 and Gly-44. Glu-99 serves as a coordination point for GMP. Glu-99 contacts IMP. Mg(2+)-binding residues include Glu-99 and Asp-100. Catalysis depends on Asp-103, which acts as the Proton acceptor. GMP-binding positions include 103 to 108, Lys-131, and Asp-159; that span reads DSGKTL. Residues 103 to 108 and Lys-131 each bind IMP; that span reads DSGKTL. Arg-165 lines the diphosphate pocket.

This sequence belongs to the purine/pyrimidine phosphoribosyltransferase family. As to quaternary structure, homotetramer. Mg(2+) serves as cofactor.

The protein localises to the cytoplasm. It carries out the reaction IMP + diphosphate = hypoxanthine + 5-phospho-alpha-D-ribose 1-diphosphate. It catalyses the reaction GMP + diphosphate = guanine + 5-phospho-alpha-D-ribose 1-diphosphate. It functions in the pathway purine metabolism; IMP biosynthesis via salvage pathway; IMP from hypoxanthine: step 1/1. Its function is as follows. Purine salvage pathway enzyme which catalyzes the transfer of the ribosyl-5-phosphate group from 5-phospho-alpha-D-ribose 1-diphosphate (PRPP) to the N9 position of hypoxanthine to yield IMP (inosine 5'-monophosphate). To a lesser extent, can also act on guanine leading to GMP, but shows a highly less efficient activity with xanthine. This chain is Hypoxanthine phosphoribosyltransferase (hpt), found in Buchnera aphidicola subsp. Schizaphis graminum (strain Sg).